The chain runs to 357 residues: MLEDDFGRDVSGVRVSLTDRCNFDCVYCHNEGLGDTRGPIDPRENELSTDRVVRFLSVAHEFGVDAVKLTGGEPMLRSDLEAIIRRTPDDMAVSMTTNGTFLPGRAADLVDAGLERVNISQDAMDNDAFAELTQSGAYDAVLEGVEAALDAGLAPVKLNMVVFEPTAGYVPEMVDHVAARDGLRLQLIEYMPELAGHPEWAIDIDRVHDWLADRADRIETREMHDRRRYWVSSRDAGSTADDAAQSVTPDGGAHPDQGMVEIVDPVGNPQFCANCHRVRLTHDGYLKGCLNRNDDLRGIGETTQSMRAAFRETVANRVPYYGEYMTRTDDGGWEINDDYLDVEGDRDPYEYAADDSA.

The Radical SAM core domain occupies 5 to 234 (DFGRDVSGVR…DRRRYWVSSR (230 aa)). Residue Arg-14 coordinates GTP. [4Fe-4S] cluster-binding residues include Cys-21 and Cys-25. Tyr-27 provides a ligand contact to S-adenosyl-L-methionine. Cys-28 is a binding site for [4Fe-4S] cluster. Residue Lys-68 coordinates GTP. S-adenosyl-L-methionine is bound at residue Gly-72. Residue Thr-96 coordinates GTP. Ser-120 provides a ligand contact to S-adenosyl-L-methionine. Lys-157 is a GTP binding site. Positions 232–256 (SSRDAGSTADDAAQSVTPDGGAHPD) are disordered. Cys-272 and Cys-275 together coordinate [4Fe-4S] cluster. 277–279 (RVR) contacts GTP. Cys-289 lines the [4Fe-4S] cluster pocket.

It belongs to the radical SAM superfamily. MoaA family. It depends on [4Fe-4S] cluster as a cofactor.

It catalyses the reaction GTP + AH2 + S-adenosyl-L-methionine = (8S)-3',8-cyclo-7,8-dihydroguanosine 5'-triphosphate + 5'-deoxyadenosine + L-methionine + A + H(+). Its pathway is cofactor biosynthesis; molybdopterin biosynthesis. Functionally, catalyzes the cyclization of GTP to (8S)-3',8-cyclo-7,8-dihydroguanosine 5'-triphosphate. The polypeptide is Probable GTP 3',8-cyclase (Halobacterium salinarum (strain ATCC 29341 / DSM 671 / R1)).